The chain runs to 565 residues: Proline--tRNA ligase (565 aa).

This sequence belongs to the class-II aminoacyl-tRNA synthetase family. ProS type 1 subfamily. As to quaternary structure, homodimer.

It localises to the cytoplasm. The catalysed reaction is tRNA(Pro) + L-proline + ATP = L-prolyl-tRNA(Pro) + AMP + diphosphate. Its function is as follows. Catalyzes the attachment of proline to tRNA(Pro) in a two-step reaction: proline is first activated by ATP to form Pro-AMP and then transferred to the acceptor end of tRNA(Pro). As ProRS can inadvertently accommodate and process non-cognate amino acids such as alanine and cysteine, to avoid such errors it has two additional distinct editing activities against alanine. One activity is designated as 'pretransfer' editing and involves the tRNA(Pro)-independent hydrolysis of activated Ala-AMP. The other activity is designated 'posttransfer' editing and involves deacylation of mischarged Ala-tRNA(Pro). The misacylated Cys-tRNA(Pro) is not edited by ProRS. The protein is Proline--tRNA ligase of Lactobacillus johnsonii (strain CNCM I-12250 / La1 / NCC 533).